The chain runs to 408 residues: Neutral cholesterol ester hydrolase 1 (408 aa).

At 1–4 (MRSS) the chain is on the cytoplasmic side. Residues 5–25 (CVLLTALLALAAYYIYIPLPS) traverse the membrane as a helical; Signal-anchor for type II membrane protein segment. Residues 26–408 (SVSDPWKLML…SYIKWLDQNL (383 aa)) are Lumenal-facing. Positions 113 to 115 (HGG) match the Involved in the stabilization of the negatively charged intermediate by the formation of the oxyanion hole motif. Residue serine 191 is part of the active site. N-linked (GlcNAc...) asparagine glycans are attached at residues asparagine 270 and asparagine 287. Residues aspartate 348 and histidine 378 contribute to the active site. The N-linked (GlcNAc...) asparagine glycan is linked to asparagine 389.

Belongs to the 'GDXG' lipolytic enzyme family. In terms of processing, N-glycosylated.

The protein localises to the cell membrane. Its subcellular location is the microsome. The catalysed reaction is a 1-O-alkyl-2-acetyl-sn-glycerol + H2O = a 1-O-alkyl-sn-glycerol + acetate + H(+). It carries out the reaction 1-O-hexadecyl-2-acetyl-sn-glycerol + H2O = 1-O-hexadecyl-sn-glycerol + acetate + H(+). It catalyses the reaction a cholesterol ester + H2O = cholesterol + a fatty acid + H(+). The enzyme catalyses cholesteryl (9Z-octadecenoate) + H2O = cholesterol + (9Z)-octadecenoate + H(+). Functionally, hydrolyzes 2-acetyl monoalkylglycerol ether (1-O-alkyl-2-acetyl-sn-glycerol), the penultimate precursor of the pathway for de novo synthesis of platelet-activating factor. May be responsible for the hydrolysis of cholesterol esters (such as cholesteryl (9Z-octadecenoate)) in macrophages. Also involved in organ detoxification by hydrolyzing exogenous organophosphorus compounds. This is Neutral cholesterol ester hydrolase 1 (NCEH1) from Bos taurus (Bovine).